The following is a 660-amino-acid chain: Junctophilin-1 (660 aa).

Residues 1–638 lie on the Cytoplasmic side of the membrane; sequence MTGGRFDFDD…EKEANSGPNS (638 aa). MORN repeat units follow at residues 14 to 36, 38 to 59, 60 to 82, 106 to 128, and 129 to 151; these read YCGG…KGQG, YSGS…SGNT, YQGY…KWMY, YEGT…DGGT, and YQGQ…PYGM. Phosphoserine occurs at positions 157, 216, and 220. A disordered region spans residues 228-247; sequence SKSSISSKRSSVRSDAAMSR. 2 MORN repeats span residues 281 to 303 and 304 to 326; these read YMGE…NGMK and YEGE…DGSK. Positions 437–454 are enriched in basic and acidic residues; it reads NPEEKVLEKPPSPKESPH. Positions 437–631 are disordered; that stretch reads NPEEKVLEKP…NDTCPSLEKE (195 aa). Ser-452 is modified (phosphoserine). Thr-461 carries the phosphothreonine modification. Residues Ser-465, Ser-469, and Ser-475 each carry the phosphoserine modification. Positions 466-477 are enriched in low complexity; the sequence is PESSPKQSHSPQ. 2 stretches are compositionally biased toward basic and acidic residues: residues 562-571 and 598-612; these read PPEDREDDRG and VAKE…KKSE. A helical; Anchor for type IV membrane protein membrane pass occupies residues 639-659; it reads IMIVLVMLLNIGLAILFVHFL.

Belongs to the junctophilin family. As to expression, specifically expressed in skeletal muscle. Weakly expressed in embryos and neonates. Abundant in young adult muscles.

The protein resides in the cell membrane. It localises to the endoplasmic reticulum membrane. It is found in the sarcoplasmic reticulum membrane. Its function is as follows. Junctophilins contribute to the formation of junctional membrane complexes (JMCs) which link the plasma membrane with the endoplasmic or sarcoplasmic reticulum in excitable cells. Provides a structural foundation for functional cross-talk between the cell surface and intracellular calcium release channels. JPH1 contributes to the construction of the skeletal muscle triad by linking the t-tubule (transverse-tubule) and SR (sarcoplasmic reticulum) membranes. This chain is Junctophilin-1 (Jph1), found in Mus musculus (Mouse).